A 562-amino-acid chain; its full sequence is Potassium-transporting ATPase potassium-binding subunit (562 aa).

12 consecutive transmembrane segments (helical) span residues 5–25 (GILAIFLVVLALVACAWPLGG), 65–85 (AYLRAMMVSNLVMALFAYAVF), 135–155 (IGITFLQFTSAATGLAAAMAF), 181–201 (LLLPIAAILAVLLLALGVPET), 257–277 (ILEIMGMGLIPTALVFTAGHF), 283–303 (LAIVLCTLLGAILLAGAYIVY), 331–351 (FGLPLTSLFVAATTAYTTGAV), 358–378 (LMPLSGMVPLLFMMFNLIFGG), 381–401 (VGLLNILMFLIIAVFISGLMV), 422–442 (AAMLVHPFVILVPTAIAMALP), 486–506 (ISIGLVMLFGRYVSIIAMLAI), and 528–548 (FAFGYVFVAVFIIVGALTFFP).

Belongs to the KdpA family. The system is composed of three essential subunits: KdpA, KdpB and KdpC.

It localises to the cell membrane. Functionally, part of the high-affinity ATP-driven potassium transport (or Kdp) system, which catalyzes the hydrolysis of ATP coupled with the electrogenic transport of potassium into the cytoplasm. This subunit binds the extracellular potassium ions and delivers the ions to the membrane domain of KdpB through an intramembrane tunnel. In Alicyclobacillus acidocaldarius subsp. acidocaldarius (strain ATCC 27009 / DSM 446 / BCRC 14685 / JCM 5260 / KCTC 1825 / NBRC 15652 / NCIMB 11725 / NRRL B-14509 / 104-IA) (Bacillus acidocaldarius), this protein is Potassium-transporting ATPase potassium-binding subunit.